Reading from the N-terminus, the 771-residue chain is Protein lin-54 homolog (771 aa).

2 disordered regions span residues 21–44 and 68–105; these read AMDE…SAQV and TNAK…IPSL. The span at 72 to 92 shows a compositional bias: low complexity; that stretch reads STTSSTTQLLLTPSSSSSTTT. Phosphoserine is present on residues S288, S292, and S308. A CRC domain is found at 544–657; it reads PRKPCNCTRS…KCMGCKNFEE (114 aa). A DNA-binding region spans residues 546–559; sequence KPCNCTRSQCLKLY. Zn(2+) contacts are provided by C548, C550, C555, C560, C562, C569, C572, C574, and C577. A linker region spans residues 606–619; it reads IGKGKEGESDRRHS. The Zn(2+) site is built by C622, C624, C629, C634, C636, C643, C647, C649, and C652. The DNA-binding stretch occupies residues 622 to 635; that stretch reads CNCKKSGCLKNYCE.

The protein belongs to the lin-54 family. Component of the DREAM complex.

The protein resides in the nucleus. Its function is as follows. Component of the DREAM complex, a multiprotein complex that can both act as a transcription activator or repressor depending on the context. Specifically recognizes the consensus motif 5'-TTYRAA-3' in target DNA. In Danio rerio (Zebrafish), this protein is Protein lin-54 homolog (lin54).